Reading from the N-terminus, the 509-residue chain is Maturase K (509 aa).

The protein belongs to the intron maturase 2 family. MatK subfamily.

The protein localises to the plastid. Its subcellular location is the chloroplast. Usually encoded in the trnK tRNA gene intron. Probably assists in splicing its own and other chloroplast group II introns. In Clematis vitalba (Evergreen clematis), this protein is Maturase K.